The following is a 73-amino-acid chain: U3-agatoxin-Ao1i (73 aa).

A signal peptide spans 1-20 (MRTIISLLLLSAMVFAEIEA). Residues 21–34 (ISLEEGLQLFEGER) constitute a propeptide that is removed on maturation. 4 disulfides stabilise this stretch: Cys36-Cys52, Cys43-Cys57, Cys51-Cys67, and Cys59-Cys65. The residue at position 71 (Ser71) is a Serine amide.

Belongs to the neurotoxin 07 (Beta/delta-agtx) family. 03 (aga-4) subfamily. Aga sub-subfamily. Expressed by the venom gland.

Its subcellular location is the secreted. In terms of biological role, insecticidal neurotoxin that induces an irreversible spastic paralysis when injected into insects. Modifies presynaptic voltage-gated sodium channels (Nav), causing them to open at the normal resting potential of the nerve. This leads to spontaneous release of neurotransmitter and repetitive action potentials in motor neurons. In Agelena orientalis (Funnel-web spider), this protein is U3-agatoxin-Ao1i.